Reading from the N-terminus, the 484-residue chain is Glutamyl-tRNA(Gln) amidotransferase subunit A (484 aa).

Catalysis depends on charge relay system residues Lys76 and Ser151. Ser175 acts as the Acyl-ester intermediate in catalysis.

This sequence belongs to the amidase family. GatA subfamily. In terms of assembly, heterotrimer of A, B and C subunits.

It catalyses the reaction L-glutamyl-tRNA(Gln) + L-glutamine + ATP + H2O = L-glutaminyl-tRNA(Gln) + L-glutamate + ADP + phosphate + H(+). Its function is as follows. Allows the formation of correctly charged Gln-tRNA(Gln) through the transamidation of misacylated Glu-tRNA(Gln) in organisms which lack glutaminyl-tRNA synthetase. The reaction takes place in the presence of glutamine and ATP through an activated gamma-phospho-Glu-tRNA(Gln). The protein is Glutamyl-tRNA(Gln) amidotransferase subunit A of Halorhodospira halophila (strain DSM 244 / SL1) (Ectothiorhodospira halophila (strain DSM 244 / SL1)).